Consider the following 291-residue polypeptide: Putative phosphatase MG263 (291 aa).

The active-site Nucleophile is the D11. D11 is a binding site for Mg(2+). Position 12 (L12) interacts with phosphate. Mg(2+) is bound at residue D13. Residues 60 to 61 (TG) and K217 contribute to the phosphate site. A Mg(2+)-binding site is contributed by D241. N244 contributes to the phosphate binding site.

Belongs to the HAD-like hydrolase superfamily. Cof family. The cofactor is Mg(2+).

The sequence is that of Putative phosphatase MG263 from Mycoplasma genitalium (strain ATCC 33530 / DSM 19775 / NCTC 10195 / G37) (Mycoplasmoides genitalium).